We begin with the raw amino-acid sequence, 133 residues long: ATP synthase epsilon chain (133 aa).

This sequence belongs to the ATPase epsilon chain family. As to quaternary structure, F-type ATPases have 2 components, CF(1) - the catalytic core - and CF(0) - the membrane proton channel. CF(1) has five subunits: alpha(3), beta(3), gamma(1), delta(1), epsilon(1). CF(0) has three main subunits: a, b and c.

The protein localises to the cell membrane. Produces ATP from ADP in the presence of a proton gradient across the membrane. The protein is ATP synthase epsilon chain of Bacillus mycoides (strain KBAB4) (Bacillus weihenstephanensis).